Reading from the N-terminus, the 268-residue chain is Ribosome maturation factor RimP (268 aa).

2 disordered regions span residues 1 to 41 (MGSA…GRGG) and 223 to 268 (LVEP…EMTR). Over residues 32-41 (PSGSARGRGG) the composition is skewed to low complexity. The segment covering 248–257 (ESNDDGREAG) has biased composition (basic and acidic residues).

This sequence belongs to the RimP family.

Its subcellular location is the cytoplasm. Its function is as follows. Required for maturation of 30S ribosomal subunits. This Frankia casuarinae (strain DSM 45818 / CECT 9043 / HFP020203 / CcI3) protein is Ribosome maturation factor RimP.